Consider the following 404-residue polypeptide: Lissencephaly-1 homolog (404 aa).

The LisH domain occupies 7 to 39; it reads QKEEINRAIAEYMQNNGYSESFSVFLKESSLSE. A coiled-coil region spans residues 54 to 81; that stretch reads TTVLRLQRKVNDLESKLQESQREINHGA. Positions 69 to 89 are enriched in basic and acidic residues; the sequence is KLQESQREINHGAPTRDKRQA. The tract at residues 69–90 is disordered; that stretch reads KLQESQREINHGAPTRDKRQAA. WD repeat units follow at residues 104-145, 146-185, 189-228, 231-270, 273-327, 330-369, and 372-404; these read GHRL…RTLK, GHTD…DCLK, GHEH…CVYT, GHND…AKLV, DHEH…VLFT, AHEN…CMKA, and AHEH…WECR.

The protein belongs to the WD repeat LIS1/nudF family. As to quaternary structure, component of a dynein-regulating complex composed of at least lis-1 and nud-2. Interacts with nud-2; the interaction is direct. Expressed in all classes of neurons in the ventral cord. Expressed in the multinucleate spermathecal valves and adult seam cells.

Its subcellular location is the cytoplasm. It localises to the cytoskeleton. The protein resides in the microtubule organizing center. It is found in the centrosome. The protein localises to the chromosome. Its subcellular location is the centromere. It localises to the kinetochore. The protein resides in the nucleus envelope. Functionally, positively regulates the activity of the minus-end directed microtubule motor protein dynein. May enhance dynein-mediated microtubule sliding by targeting dynein to the microtubule plus end. Required for several dynein- and microtubule-dependent processes such as nuclear migration during cell division. Part of a complex with nud-2, which is recruited to the nuclear envelope by unc-83, where, in turn, it recruits dynein to the nuclear surface and regulates nuclear migration in hypodermal precursor cells. Plays a role in GABAergic synaptic vesicle localization in the ventral nerve cord. Required for neuronal cell differentiation. This chain is Lissencephaly-1 homolog, found in Caenorhabditis elegans.